A 445-amino-acid chain; its full sequence is ATP-dependent protease ATPase subunit HslU (445 aa).

ATP is bound by residues Ile17, 59 to 64 (GVGKTE), Asp254, Glu319, and Arg391.

This sequence belongs to the ClpX chaperone family. HslU subfamily. In terms of assembly, a double ring-shaped homohexamer of HslV is capped on each side by a ring-shaped HslU homohexamer. The assembly of the HslU/HslV complex is dependent on binding of ATP.

The protein localises to the cytoplasm. Its function is as follows. ATPase subunit of a proteasome-like degradation complex; this subunit has chaperone activity. The binding of ATP and its subsequent hydrolysis by HslU are essential for unfolding of protein substrates subsequently hydrolyzed by HslV. HslU recognizes the N-terminal part of its protein substrates and unfolds these before they are guided to HslV for hydrolysis. This Pseudomonas fluorescens (strain SBW25) protein is ATP-dependent protease ATPase subunit HslU.